The chain runs to 1216 residues: 1-phosphatidylinositol 4,5-bisphosphate phosphodiesterase beta-1 (1216 aa).

The S-palmitoyl cysteine moiety is linked to residue cysteine 17. Phosphoserine is present on serine 236. Residues 316–467 form the PI-PLC X-box domain; it reads EDMSQPLSHY…LMYKILVKNK (152 aa). Active-site residues include histidine 331 and histidine 378. Phosphoserine is present on serine 417. The disordered stretch occupies residues 469-534; that stretch reads KSHKSSEGSG…MDEGTAGSEA (66 aa). Basic and acidic residues predominate over residues 472 to 483; that stretch reads KSSEGSGKKKLS. The span at 491–501 shows a compositional bias: low complexity; sequence SDSSSVFEPSS. A compositionally biased stretch (acidic residues) spans 507-518; the sequence is ADTESDDDDDDD. The residue at position 509 (threonine 509) is a Phosphothreonine. Serine 511 and serine 582 each carry phosphoserine. The PI-PLC Y-box domain maps to 540-656; it reads MSNLVNYIQP…GYRLKPEFMR (117 aa). Positions 656–784 constitute a C2 domain; sequence RRPDKHFDPF…CLRNERNQPL (129 aa). Disordered stretches follow at residues 834 to 891, 933 to 993, 1071 to 1095, and 1172 to 1216; these read DEEE…VKAP, LVKR…IEQD, KMDK…EEEK, and KISE…DTPL. Serine 887 is subject to Phosphoserine; by PKC. 2 stretches are compositionally biased toward basic and acidic residues: residues 941–951 and 959–979; these read TTDLIKEHTTK and YLRR…KKSE. Residues serine 978 and serine 987 each carry the phosphoserine modification. Residues 980–991 show a composition bias toward polar residues; the sequence is PSSPDHVSSTIE. A compositionally biased stretch (basic and acidic residues) spans 1075-1095; sequence KRQEKITEAKSKDKSQMEEEK. Positions 1187–1198 are enriched in polar residues; that stretch reads TSDSGKLNQKPP. Phosphoserine is present on residues serine 1199 and serine 1200. Residues 1207–1216 are compositionally biased toward basic and acidic residues; the sequence is NPGKEFDTPL.

As to quaternary structure, interacts with DGKQ. Requires Ca(2+) as cofactor. Palmitoylated. Palmitoylation at Cys-17 by ZDHHC21 regulates the signaling activity of PLCB1 and the function of the endothelial barrier. Palmitoylation by ZDHHC21 is stimulated by inflammation.

It is found in the nucleus membrane. The protein localises to the cytoplasm. The catalysed reaction is a 1,2-diacyl-sn-glycero-3-phospho-(1D-myo-inositol-4,5-bisphosphate) + H2O = 1D-myo-inositol 1,4,5-trisphosphate + a 1,2-diacyl-sn-glycerol + H(+). The enzyme catalyses a 1,2-diacyl-sn-glycero-3-phospho-(1D-myo-inositol) + H2O = 1D-myo-inositol 1-phosphate + a 1,2-diacyl-sn-glycerol + H(+). Its function is as follows. Catalyzes the hydrolysis of 1-phosphatidylinositol 4,5-bisphosphate into diacylglycerol (DAG) and inositol 1,4,5-trisphosphate (IP3) and mediates intracellular signaling downstream of G protein-coupled receptors. Regulates the function of the endothelial barrier. This chain is 1-phosphatidylinositol 4,5-bisphosphate phosphodiesterase beta-1 (PLCB1), found in Bos taurus (Bovine).